Reading from the N-terminus, the 217-residue chain is Probable GTP-binding protein EngB (217 aa).

One can recognise an EngB-type G domain in the interval 29–213 (GPLEVAFAGR…RQAIAETVGI (185 aa)). GTP-binding positions include 37 to 44 (GRSNVGKS), 64 to 68 (GRTQE), 91 to 94 (DMPG), 158 to 161 (TKTD), and 192 to 194 (TSS). Mg(2+) contacts are provided by Ser44 and Thr66.

It belongs to the TRAFAC class TrmE-Era-EngA-EngB-Septin-like GTPase superfamily. EngB GTPase family. It depends on Mg(2+) as a cofactor.

Its function is as follows. Necessary for normal cell division and for the maintenance of normal septation. This Rhizobium johnstonii (strain DSM 114642 / LMG 32736 / 3841) (Rhizobium leguminosarum bv. viciae) protein is Probable GTP-binding protein EngB.